Reading from the N-terminus, the 352-residue chain is Aromatic amino acid aminotransferase (352 aa).

Residue K217 is modified to N6-(pyridoxal phosphate)lysine.

This sequence belongs to the class-II pyridoxal-phosphate-dependent aminotransferase family. As to quaternary structure, homodimer. Pyridoxal 5'-phosphate serves as cofactor.

The enzyme catalyses an aromatic L-alpha-amino acid + 2-oxoglutarate = an aromatic oxo-acid + L-glutamate. Functionally, aminotransferase that catalyzes the conversion of aromatic amino acids and 2-oxoglutarate into corresponding aromatic oxo acids and L-glutamate. This is Aromatic amino acid aminotransferase from Cutibacterium acnes (strain DSM 16379 / KPA171202) (Propionibacterium acnes).